The following is a 216-amino-acid chain: Elongation factor Ts (216 aa).

Residues T81–V84 are involved in Mg(2+) ion dislocation from EF-Tu.

Belongs to the EF-Ts family.

Its subcellular location is the cytoplasm. Associates with the EF-Tu.GDP complex and induces the exchange of GDP to GTP. It remains bound to the aminoacyl-tRNA.EF-Tu.GTP complex up to the GTP hydrolysis stage on the ribosome. The chain is Elongation factor Ts from Geotalea uraniireducens (strain Rf4) (Geobacter uraniireducens).